The primary structure comprises 501 residues: Lysine--tRNA ligase (501 aa).

Mg(2+) contacts are provided by Glu411 and Glu418.

Belongs to the class-II aminoacyl-tRNA synthetase family. In terms of assembly, homodimer. It depends on Mg(2+) as a cofactor.

The protein resides in the cytoplasm. It carries out the reaction tRNA(Lys) + L-lysine + ATP = L-lysyl-tRNA(Lys) + AMP + diphosphate. The polypeptide is Lysine--tRNA ligase (Clostridium perfringens (strain SM101 / Type A)).